The sequence spans 140 residues: Large ribosomal subunit protein uL11 (140 aa).

It belongs to the universal ribosomal protein uL11 family. Part of the ribosomal stalk of the 50S ribosomal subunit. Interacts with L10 and the large rRNA to form the base of the stalk. L10 forms an elongated spine to which L12 dimers bind in a sequential fashion forming a multimeric L10(L12)X complex. In terms of processing, one or more lysine residues are methylated.

Its function is as follows. Forms part of the ribosomal stalk which helps the ribosome interact with GTP-bound translation factors. The protein is Large ribosomal subunit protein uL11 of Dehalococcoides mccartyi (strain CBDB1).